Here is a 678-residue protein sequence, read N- to C-terminus: DNA mismatch repair protein MutL (678 aa).

Belongs to the DNA mismatch repair MutL/HexB family.

This protein is involved in the repair of mismatches in DNA. It is required for dam-dependent methyl-directed DNA mismatch repair. May act as a 'molecular matchmaker', a protein that promotes the formation of a stable complex between two or more DNA-binding proteins in an ATP-dependent manner without itself being part of a final effector complex. The sequence is that of DNA mismatch repair protein MutL from Lactiplantibacillus plantarum (strain ATCC BAA-793 / NCIMB 8826 / WCFS1) (Lactobacillus plantarum).